Consider the following 78-residue polypeptide: Defensin-like protein (78 aa).

The signal sequence occupies residues 1 to 31 (MGRSIRLFATFFLIAMLFLSTEMGPMTSAEA). 4 disulfide bridges follow: Cys-34/Cys-78, Cys-45/Cys-65, Cys-51/Cys-72, and Cys-55/Cys-74.

Belongs to the DEFL family. Predominantly expressed in the pistil during all stages of flower development.

It is found in the secreted. In terms of biological role, may be involved in the defense of the pistil against pathogen infection. This is Defensin-like protein from Petunia integrifolia (Violet-flowered petunia).